Here is a 381-residue protein sequence, read N- to C-terminus: MKYISILGASGSIGTQTLDIIRSHPDEFQLTAISIGKNVDMARAIIEEFAPRLVAVAEADAYEKLRSEYAGKVKIVFGEEGLIEAAAFPETDIVVTAVVGSVGLVPTLRAIEAGKTIALANKETLVTAGHIVTAAAKKHGVSLLPVDSEHSAIFQCLQGEKRNRVEKIILTASGGSFRDKTREELKNVTVEEALRHPNWSMGAKITIDSATMMNKGLEVIEAHWLFELPYEQIDVLLHRESIIHSLVQFRDTSVIAQLGTPDMHVPIQYALTYPERLPLANAKPLDLAEISTLHFERVDFERFRCLQLAYEAGKAGGSLPTVLNAANEEAVSAFLQGRIAFLTIEEYIERALERHEFVNEPSLEEIREIDAETRRYVRSLL.

NADPH contacts are provided by serine 10, glycine 11, serine 12, isoleucine 13, glycine 36, lysine 37, asparagine 38, and asparagine 121. A 1-deoxy-D-xylulose 5-phosphate-binding site is contributed by lysine 122. Position 123 (glutamate 123) interacts with NADPH. Mn(2+) is bound at residue aspartate 147. 4 residues coordinate 1-deoxy-D-xylulose 5-phosphate: serine 148, glutamate 149, serine 173, and histidine 196. Glutamate 149 contributes to the Mn(2+) binding site. Position 202 (glycine 202) interacts with NADPH. Residues serine 209, asparagine 214, lysine 215, and glutamate 218 each contribute to the 1-deoxy-D-xylulose 5-phosphate site. Residue glutamate 218 coordinates Mn(2+).

This sequence belongs to the DXR family. It depends on Mg(2+) as a cofactor. Mn(2+) is required as a cofactor.

The catalysed reaction is 2-C-methyl-D-erythritol 4-phosphate + NADP(+) = 1-deoxy-D-xylulose 5-phosphate + NADPH + H(+). The protein operates within isoprenoid biosynthesis; isopentenyl diphosphate biosynthesis via DXP pathway; isopentenyl diphosphate from 1-deoxy-D-xylulose 5-phosphate: step 1/6. Its function is as follows. Catalyzes the NADPH-dependent rearrangement and reduction of 1-deoxy-D-xylulose-5-phosphate (DXP) to 2-C-methyl-D-erythritol 4-phosphate (MEP). In Geobacillus sp. (strain WCH70), this protein is 1-deoxy-D-xylulose 5-phosphate reductoisomerase.